The following is a 107-amino-acid chain: Small ribosomal subunit protein bS6 (107 aa).

The protein belongs to the bacterial ribosomal protein bS6 family.

Its function is as follows. Binds together with bS18 to 16S ribosomal RNA. The polypeptide is Small ribosomal subunit protein bS6 (Synechococcus elongatus (strain ATCC 33912 / PCC 7942 / FACHB-805) (Anacystis nidulans R2)).